Here is a 492-residue protein sequence, read N- to C-terminus: GTPase Der (492 aa).

2 consecutive EngA-type G domains span residues 3-167 (FTLA…DAYA) and 201-381 (LQVA…EVWN). GTP contacts are provided by residues 9–16 (GRPNVGKS), 56–60 (DTAGL), 119–122 (NKAE), 207–214 (GRPNAGKS), 259–263 (DTAGM), and 324–327 (NKWD). One can recognise a KH-like domain in the interval 382–468 (RRVTTAQLNR…RLWMRGQNDA (87 aa)). Positions 462–492 (MRGQNDANPYKGRKKAPPSKLRKHTDGRRKD) are disordered. A compositionally biased stretch (basic residues) spans 472–492 (KGRKKAPPSKLRKHTDGRRKD).

It belongs to the TRAFAC class TrmE-Era-EngA-EngB-Septin-like GTPase superfamily. EngA (Der) GTPase family. Associates with the 50S ribosomal subunit.

GTPase that plays an essential role in the late steps of ribosome biogenesis. This chain is GTPase Der, found in Roseobacter denitrificans (strain ATCC 33942 / OCh 114) (Erythrobacter sp. (strain OCh 114)).